Reading from the N-terminus, the 262-residue chain is Type III pantothenate kinase (262 aa).

10–17 provides a ligand contact to ATP; it reads DIGNTTTV. 110–113 contacts substrate; that stretch reads GADR. The active-site Proton acceptor is the Asp112. Residue Asp134 coordinates K(+). Residue Thr137 coordinates ATP. Thr189 lines the substrate pocket.

It belongs to the type III pantothenate kinase family. Homodimer. NH4(+) serves as cofactor. The cofactor is K(+).

Its subcellular location is the cytoplasm. It carries out the reaction (R)-pantothenate + ATP = (R)-4'-phosphopantothenate + ADP + H(+). The protein operates within cofactor biosynthesis; coenzyme A biosynthesis; CoA from (R)-pantothenate: step 1/5. In terms of biological role, catalyzes the phosphorylation of pantothenate (Pan), the first step in CoA biosynthesis. In Deinococcus radiodurans (strain ATCC 13939 / DSM 20539 / JCM 16871 / CCUG 27074 / LMG 4051 / NBRC 15346 / NCIMB 9279 / VKM B-1422 / R1), this protein is Type III pantothenate kinase.